We begin with the raw amino-acid sequence, 256 residues long: C-8 sterol isomerase (256 aa).

A disordered region spans residues 1-31 (MPPKKQSSSGGNKPSGSGSSSGRSSSGSSCR). Low complexity predominate over residues 7–30 (SSSGGNKPSGSGSSSGRSSSGSSC). A helical transmembrane segment spans residues 40 to 60 (IGGWLKFFAILFALVAPIAYV).

This sequence belongs to the ERG2 family.

It is found in the endoplasmic reticulum membrane. Its pathway is steroid metabolism; ergosterol biosynthesis; ergosterol from zymosterol: step 2/5. Functionally, catalyzes the reaction which results in unsaturation at C-7 in the B ring of sterols. The polypeptide is C-8 sterol isomerase (erg-1) (Neurospora crassa (strain ATCC 24698 / 74-OR23-1A / CBS 708.71 / DSM 1257 / FGSC 987)).